Here is a 223-residue protein sequence, read N- to C-terminus: Uracil-DNA glycosylase (223 aa).

D67 functions as the Proton acceptor in the catalytic mechanism.

The protein belongs to the uracil-DNA glycosylase (UDG) superfamily. UNG family.

Its subcellular location is the cytoplasm. The catalysed reaction is Hydrolyzes single-stranded DNA or mismatched double-stranded DNA and polynucleotides, releasing free uracil.. Functionally, excises uracil residues from the DNA which can arise as a result of misincorporation of dUMP residues by DNA polymerase or due to deamination of cytosine. The protein is Uracil-DNA glycosylase of Borrelia hermsii (strain HS1 / DAH).